We begin with the raw amino-acid sequence, 202 residues long: Capsid protein (202 aa).

Belongs to the tymoviruses capsid protein family.

Its subcellular location is the virion. In terms of biological role, self-assembles to form a T=3 icosahedral capsid composed of 180 copies of the capsid protein. The capsid encapsulates the single-stranded RNA genome. This Erysimum (ELV) protein is Capsid protein.